The sequence spans 301 residues: MNVPLTHLQRLEAESIHIFREVAAAFTKPVMLYSVGKDSSVLMHLAMKAFYPAKPPFPFLHVDTTWKFREMIAFRDQMAQKRGFDLLVHFNEDGVRDNINPFDHGSNTHTHVMKTVALRQALDKYGFDAAFGGARRDEEKSRAKERIFSFRNAQHVWDPKNQRPEMWKIFNTRIASGESIRVFPLSNWTELDIWQYILQENIPIVPLYFAKQRPVVERDGMLILRDDERMKLRPGETVENRLVRFRTLGCYPLTGAIESDADTLEAIVGEMLTARTSERQGRLIDRDEAGSMEKKKREGYF.

The disordered stretch occupies residues 279–301; it reads RQGRLIDRDEAGSMEKKKREGYF.

The protein belongs to the PAPS reductase family. CysD subfamily. As to quaternary structure, sulfate-activating enzymes, NodP and NodQ, may be physically associated.

The enzyme catalyses sulfate + ATP + H(+) = adenosine 5'-phosphosulfate + diphosphate. Functionally, proposed to provide activated sulfate for transfer to nod factor. In Rhizobium sp. (strain N33), this protein is Sulfate adenylyltransferase subunit 2 (nodP).